The sequence spans 108 residues: UPF0145 protein MADE_1007770 (108 aa).

Belongs to the UPF0145 family.

The chain is UPF0145 protein MADE_1007770 from Alteromonas mediterranea (strain DSM 17117 / CIP 110805 / LMG 28347 / Deep ecotype).